The chain runs to 377 residues: Ipis-1 (377 aa).

2 N-linked (GlcNAc...) asparagine glycosylation sites follow: Asn-11 and Asn-226.

Belongs to the serpin family. In terms of tissue distribution, female salivary gland. Not detected in midgut and other tissues.

It is found in the secreted. Its function is as follows. Salivary protein with immunosuppressive properties that can modulate blood feeding of ticks on vertebrate species. Inhibits proliferation of bovine peripheral blood mononuclear cells (PBMCs). Inhibits IFN-gamma (IFNG) production by bovine PBMCs. This chain is Ipis-1, found in Ixodes persulcatus (Taiga tick).